The following is a 178-amino-acid chain: Protein GrpE (178 aa).

Residues 1-11 are compositionally biased toward polar residues; that stretch reads MENTQENPTDQ. The tract at residues 1-31 is disordered; the sequence is MENTQENPTDQTTEETGREAQAAENAAPAAE. Low complexity predominate over residues 19-31; that stretch reads EAQAAENAAPAAE.

This sequence belongs to the GrpE family. Homodimer.

It localises to the cytoplasm. In terms of biological role, participates actively in the response to hyperosmotic and heat shock by preventing the aggregation of stress-denatured proteins, in association with DnaK and GrpE. It is the nucleotide exchange factor for DnaK and may function as a thermosensor. Unfolded proteins bind initially to DnaJ; upon interaction with the DnaJ-bound protein, DnaK hydrolyzes its bound ATP, resulting in the formation of a stable complex. GrpE releases ADP from DnaK; ATP binding to DnaK triggers the release of the substrate protein, thus completing the reaction cycle. Several rounds of ATP-dependent interactions between DnaJ, DnaK and GrpE are required for fully efficient folding. The sequence is that of Protein GrpE from Burkholderia thailandensis (strain ATCC 700388 / DSM 13276 / CCUG 48851 / CIP 106301 / E264).